Reading from the N-terminus, the 546-residue chain is Chaperonin GroEL (546 aa).

Residues 29-32 (TLGP), Lys50, 86-90 (DGTTT), Gly414, and Asp494 each bind ATP. Residues 525-546 (KKESAAPAMPGHDGMGGMGGMM) form a disordered region. The segment covering 537–546 (DGMGGMGGMM) has biased composition (gly residues).

The protein belongs to the chaperonin (HSP60) family. In terms of assembly, forms a cylinder of 14 subunits composed of two heptameric rings stacked back-to-back. Interacts with the co-chaperonin GroES.

The protein resides in the cytoplasm. It carries out the reaction ATP + H2O + a folded polypeptide = ADP + phosphate + an unfolded polypeptide.. Functionally, together with its co-chaperonin GroES, plays an essential role in assisting protein folding. The GroEL-GroES system forms a nano-cage that allows encapsulation of the non-native substrate proteins and provides a physical environment optimized to promote and accelerate protein folding. This chain is Chaperonin GroEL, found in Bdellovibrio bacteriovorus (strain ATCC 15356 / DSM 50701 / NCIMB 9529 / HD100).